The sequence spans 111 residues: Urease subunit beta (111 aa).

The protein belongs to the urease beta subunit family. In terms of assembly, heterotrimer of UreA (gamma), UreB (beta) and UreC (alpha) subunits. Three heterotrimers associate to form the active enzyme.

The protein resides in the cytoplasm. The enzyme catalyses urea + 2 H2O + H(+) = hydrogencarbonate + 2 NH4(+). It functions in the pathway nitrogen metabolism; urea degradation; CO(2) and NH(3) from urea (urease route): step 1/1. The sequence is that of Urease subunit beta from Psychrobacter cryohalolentis (strain ATCC BAA-1226 / DSM 17306 / VKM B-2378 / K5).